A 192-amino-acid polypeptide reads, in one-letter code: Fe/S biogenesis protein NfuA (192 aa).

Residues Cys149 and Cys152 each contribute to the [4Fe-4S] cluster site.

It belongs to the NfuA family. In terms of assembly, homodimer. Requires [4Fe-4S] cluster as cofactor.

In terms of biological role, involved in iron-sulfur cluster biogenesis. Binds a 4Fe-4S cluster, can transfer this cluster to apoproteins, and thereby intervenes in the maturation of Fe/S proteins. Could also act as a scaffold/chaperone for damaged Fe/S proteins. This is Fe/S biogenesis protein NfuA from Alteromonas mediterranea (strain DSM 17117 / CIP 110805 / LMG 28347 / Deep ecotype).